A 357-amino-acid chain; its full sequence is MSDKTPRKPTAFRLEQPARVSAASEQEEPRRPRAVKDLEQITPQADVFDLTDDEAAELEILDPAFEAPERKGWSLSRILFGALGILVSFAIGIWTEDLIRALFARADWLGWTALGVAMVALAAFAAIILRELVALRRLASVQHLRKDAADAAERDDMAAARKAVDALRTIAAGIPETAKGRQLLESLTDDIIDGRDLIRLAETEILRPLDREARTLVLNASKRVSIVTAISPRALVDIGYVIFESARLIRRLSQLYGGRPGTLGFIKFARRVIAHLAVTGTIAMGDSVMQQLVGHGLASRLSAKLGEGVVNGLMTARIGIAAMDVVRPFPFNAEKRPGIGDFIGDLARLNSDRNARK.

The tract at residues 1-36 is disordered; the sequence is MSDKTPRKPTAFRLEQPARVSAASEQEEPRRPRAVK. Basic and acidic residues predominate over residues 27–36; sequence EEPRRPRAVK. 2 helical membrane-spanning segments follow: residues 78–98 and 109–129; these read ILFG…TEDL and LGWT…AIIL.

This sequence belongs to the UPF0283 family.

It is found in the cell inner membrane. The protein is UPF0283 membrane protein BMEA_A1074 of Brucella melitensis biotype 2 (strain ATCC 23457).